Reading from the N-terminus, the 331-residue chain is 7,8-didemethyl-8-hydroxy-5-deazariboflavin synthase (331 aa).

The region spanning 6-244 (ITFSKNAFLP…ADVAVQIPPN (239 aa)) is the Radical SAM core domain. [4Fe-4S] cluster is bound by residues Cys-20, Cys-24, and Cys-27.

Belongs to the radical SAM superfamily. CofG family. In terms of assembly, consists of two subunits, CofG and CofH. [4Fe-4S] cluster serves as cofactor.

The catalysed reaction is 5-amino-5-(4-hydroxybenzyl)-6-(D-ribitylimino)-5,6-dihydrouracil + S-adenosyl-L-methionine = 7,8-didemethyl-8-hydroxy-5-deazariboflavin + 5'-deoxyadenosine + L-methionine + NH4(+) + H(+). Its pathway is cofactor biosynthesis; coenzyme F0 biosynthesis. Catalyzes the radical-mediated synthesis of 7,8-didemethyl-8-hydroxy-5-deazariboflavin from 5-amino-5-(4-hydroxybenzyl)-6-(D-ribitylimino)-5,6-dihydrouracil. The chain is 7,8-didemethyl-8-hydroxy-5-deazariboflavin synthase from Methanoculleus marisnigri (strain ATCC 35101 / DSM 1498 / JR1).